Reading from the N-terminus, the 371-residue chain is Alanine dehydrogenase (371 aa).

Substrate contacts are provided by arginine 15 and lysine 75. Residue histidine 96 is the Proton donor/acceptor of the active site. NAD(+) contacts are provided by residues serine 134, 178–179 (TA), aspartate 198, lysine 203, serine 220, 239–240 (VL), 267–270 (IAID), arginine 279, and 298–301 (VANM). The active-site Proton donor/acceptor is the aspartate 270. 2 residues coordinate Mg(2+): glutamate 323 and histidine 327.

Belongs to the AlaDH/PNT family. Homohexamer. Trimer of dimers. Mg(2+) is required as a cofactor.

Its subcellular location is the secreted. It catalyses the reaction L-alanine + NAD(+) + H2O = pyruvate + NH4(+) + NADH + H(+). It participates in amino-acid degradation; L-alanine degradation via dehydrogenase pathway; NH(3) and pyruvate from L-alanine: step 1/1. Inhibited by CuSO(4) and ZnCl(2). Catalyzes the reversible reductive amination of pyruvate to L-alanine. However, since the physiological environment of M.tuberculosis has a neutral pH, it can be assumed that the enzyme catalyzes exclusively the formation of L-alanine. May play a role in cell wall synthesis as L-alanine is an important constituent of the peptidoglycan layer. In Mycobacterium tuberculosis (strain ATCC 25618 / H37Rv), this protein is Alanine dehydrogenase (ald).